Consider the following 325-residue polypeptide: Lipoyl synthase (325 aa).

[4Fe-4S] cluster-binding residues include cysteine 66, cysteine 71, cysteine 77, cysteine 92, cysteine 96, cysteine 99, and serine 303. In terms of domain architecture, Radical SAM core spans 78 to 292 (WEDREATFLI…AQFAEGLGFA (215 aa)).

This sequence belongs to the radical SAM superfamily. Lipoyl synthase family. [4Fe-4S] cluster serves as cofactor.

Its subcellular location is the cytoplasm. It catalyses the reaction [[Fe-S] cluster scaffold protein carrying a second [4Fe-4S](2+) cluster] + N(6)-octanoyl-L-lysyl-[protein] + 2 oxidized [2Fe-2S]-[ferredoxin] + 2 S-adenosyl-L-methionine + 4 H(+) = [[Fe-S] cluster scaffold protein] + N(6)-[(R)-dihydrolipoyl]-L-lysyl-[protein] + 4 Fe(3+) + 2 hydrogen sulfide + 2 5'-deoxyadenosine + 2 L-methionine + 2 reduced [2Fe-2S]-[ferredoxin]. It functions in the pathway protein modification; protein lipoylation via endogenous pathway; protein N(6)-(lipoyl)lysine from octanoyl-[acyl-carrier-protein]: step 2/2. Functionally, catalyzes the radical-mediated insertion of two sulfur atoms into the C-6 and C-8 positions of the octanoyl moiety bound to the lipoyl domains of lipoate-dependent enzymes, thereby converting the octanoylated domains into lipoylated derivatives. This chain is Lipoyl synthase, found in Mycobacterium sp. (strain JLS).